The following is a 419-amino-acid chain: Tyrosine--tRNA ligase (419 aa).

Position 34 (Tyr-34) interacts with L-tyrosine. The 'HIGH' region motif lies at 39-48; the sequence is PTADSLHLGN. The L-tyrosine site is built by Tyr-169 and Gln-173. The 'KMSKS' region motif lies at 229 to 233; sequence KFGKS. Lys-232 is an ATP binding site. In terms of domain architecture, S4 RNA-binding spans 353–419; sequence LTLIELLISA…GKKKNFVLTY (67 aa).

Belongs to the class-I aminoacyl-tRNA synthetase family. TyrS type 1 subfamily. In terms of assembly, homodimer.

It localises to the cytoplasm. It carries out the reaction tRNA(Tyr) + L-tyrosine + ATP = L-tyrosyl-tRNA(Tyr) + AMP + diphosphate + H(+). Catalyzes the attachment of tyrosine to tRNA(Tyr) in a two-step reaction: tyrosine is first activated by ATP to form Tyr-AMP and then transferred to the acceptor end of tRNA(Tyr). The polypeptide is Tyrosine--tRNA ligase (Lactococcus lactis subsp. cremoris (strain SK11)).